We begin with the raw amino-acid sequence, 374 residues long: MKGCDSLDNLKKTPLYEIYPKYNAKIIDFAGWAMPVQFESIISEHEAVRNAAGLFDVSHMGEIIVKGKDAFPFLQNLLTNDLSKLNDNQVLYTFMCNHNGGVIDDLLVYKYSNNYYLLVVNAANIEKDYKWMLNNAGIYKVEIENVSDKIAELAIQGPKAEEILQKLTDEDLSQIKFFYFKDKVKIAGVECLVSRTGYTGEDGFEIYMPNEHAVTLWEKILEAGKDYGLKPAGLGARDTLRFEAGLPLYGNELGEDITPLEAGLGFFVKFDKGNFIGKDALLKQKEQGLKRKLVGFEMIGNGIPRHGYEVQADNQKIGYVTTGYFSPTLKKNIGLALIDSKYAQIGNQIEVIIRNKPLKAVIVDKNFYKKNYKK.

This sequence belongs to the GcvT family. As to quaternary structure, the glycine cleavage system is composed of four proteins: P, T, L and H.

It carries out the reaction N(6)-[(R)-S(8)-aminomethyldihydrolipoyl]-L-lysyl-[protein] + (6S)-5,6,7,8-tetrahydrofolate = N(6)-[(R)-dihydrolipoyl]-L-lysyl-[protein] + (6R)-5,10-methylene-5,6,7,8-tetrahydrofolate + NH4(+). Its function is as follows. The glycine cleavage system catalyzes the degradation of glycine. The chain is Aminomethyltransferase from Caldanaerobacter subterraneus subsp. tengcongensis (strain DSM 15242 / JCM 11007 / NBRC 100824 / MB4) (Thermoanaerobacter tengcongensis).